A 55-amino-acid chain; its full sequence is SIPPACDKYSRLPGCPRDYSPVCGTDGKTYPNECVLCLSNSEENKNVQIYKSGMC.

The Kazal-like domain maps to 1 to 55; that stretch reads SIPPACDKYSRLPGCPRDYSPVCGTDGKTYPNECVLCLSNSEENKNVQIYKSGMC. Cystine bridges form between Cys6–Cys37, Cys15–Cys34, and Cys23–Cys55.

The protein resides in the secreted. Its function is as follows. Inhibits trypsin and plasmin. The sequence is that of Trypsin inhibitor ClTI-1 from Gallus gallus (Chicken).